A 212-amino-acid chain; its full sequence is Peroxisomal membrane protein 4 (212 aa).

A glycan (N-linked (GlcNAc...) asparagine) is linked at asparagine 57. A run of 2 helical transmembrane segments spans residues 97–117 (GKTY…LVFG) and 153–173 (WDPF…LFEY). A glycan (N-linked (GlcNAc...) asparagine) is linked at asparagine 206.

The protein belongs to the peroxisomal membrane protein PXMP2/4 family. Interacts with PEX19. Expressed in normal prostate epithelial cells, and androgen-sensitive prostate adenocarcinoma cells. Not expressed in androgen-insensitive prostate adenocarcinoma cells.

It localises to the peroxisome membrane. This chain is Peroxisomal membrane protein 4 (PXMP4), found in Homo sapiens (Human).